The sequence spans 188 residues: Peptidyl-tRNA hydrolase (188 aa).

Y14 contributes to the tRNA binding site. The active-site Proton acceptor is the H19. TRNA is bound by residues Y64, N66, and N112.

This sequence belongs to the PTH family. In terms of assembly, monomer.

It localises to the cytoplasm. The enzyme catalyses an N-acyl-L-alpha-aminoacyl-tRNA + H2O = an N-acyl-L-amino acid + a tRNA + H(+). Functionally, hydrolyzes ribosome-free peptidyl-tRNAs (with 1 or more amino acids incorporated), which drop off the ribosome during protein synthesis, or as a result of ribosome stalling. Catalyzes the release of premature peptidyl moieties from peptidyl-tRNA molecules trapped in stalled 50S ribosomal subunits, and thus maintains levels of free tRNAs and 50S ribosomes. The protein is Peptidyl-tRNA hydrolase of Clostridium perfringens (strain ATCC 13124 / DSM 756 / JCM 1290 / NCIMB 6125 / NCTC 8237 / Type A).